Reading from the N-terminus, the 236-residue chain is Sugar fermentation stimulation protein homolog (236 aa).

It belongs to the SfsA family.

The protein is Sugar fermentation stimulation protein homolog of Pseudomonas fluorescens (strain SBW25).